The following is a 341-amino-acid chain: UDP-3-O-acylglucosamine N-acyltransferase (341 aa).

His241 serves as the catalytic Proton acceptor.

Belongs to the transferase hexapeptide repeat family. LpxD subfamily. In terms of assembly, homotrimer.

It catalyses the reaction a UDP-3-O-[(3R)-3-hydroxyacyl]-alpha-D-glucosamine + a (3R)-hydroxyacyl-[ACP] = a UDP-2-N,3-O-bis[(3R)-3-hydroxyacyl]-alpha-D-glucosamine + holo-[ACP] + H(+). Its pathway is bacterial outer membrane biogenesis; LPS lipid A biosynthesis. In terms of biological role, catalyzes the N-acylation of UDP-3-O-acylglucosamine using 3-hydroxyacyl-ACP as the acyl donor. Is involved in the biosynthesis of lipid A, a phosphorylated glycolipid that anchors the lipopolysaccharide to the outer membrane of the cell. The protein is UDP-3-O-acylglucosamine N-acyltransferase of Histophilus somni (strain 129Pt) (Haemophilus somnus).